Here is a 62-residue protein sequence, read N- to C-terminus: Alkaline proteinase (62 aa).

The Peptidase S8 domain maps to 1 to 62 (GSTSYIYDTS…FAPGTSVLSS (62 aa)). Residue D21 is the Charge relay system of the active site.

Its subcellular location is the secreted. With respect to regulation, inhibited by phenylmethanesulfonyl fluoride (PMSF) and chymostatin (CST), but not by Bowman-Birk type trypsin-chymotrypsin inhibitor (BBI). Functionally, serine protease. May be involved in the invasion of grains and hydrolysis of grain proteins. This chain is Alkaline proteinase, found in Fusarium culmorum.